A 357-amino-acid polypeptide reads, in one-letter code: Cinnamyl alcohol dehydrogenase 1 (357 aa).

Cys47 contributes to the Zn(2+) binding site. Thr49 provides a ligand contact to NADP(+). Positions 69, 70, 100, 103, 106, 114, and 163 each coordinate Zn(2+). NADP(+) is bound by residues Thr167, 188-193 (GLGGVG), 211-216 (SSSDKK), Thr251, Gly275, and 298-300 (SFI).

It belongs to the zinc-containing alcohol dehydrogenase family. In terms of assembly, homodimer. The cofactor is Zn(2+). Expressed in leaves, mainly in peltate glands.

It carries out the reaction (E)-cinnamyl alcohol + NADP(+) = (E)-cinnamaldehyde + NADPH + H(+). It catalyses the reaction (E)-coniferol + NADP(+) = (E)-coniferaldehyde + NADPH + H(+). The catalysed reaction is (E)-sinapyl alcohol + NADP(+) = (E)-sinapaldehyde + NADPH + H(+). The enzyme catalyses (E)-4-coumaroyl alcohol + NADP(+) = (E)-4-coumaraldehyde + NADPH + H(+). It carries out the reaction (E)-caffeyl alcohol + NADP(+) = (E)-caffeyl aldehyde + NADPH + H(+). Its pathway is aromatic compound metabolism; phenylpropanoid biosynthesis. Its activity is regulated as follows. 60% inhibition by 5 mM Ca(+), Mg(+) or Cu(+). Involved in the production of citral, a mixture of geranial and neral with a strong lemony scent. Reversibly oxidizes geraniol to produce geranial at half the efficiency compared with its activity with cinnamyl alcohol. Does not use nerol and neral as substrates. This Ocimum basilicum (Sweet basil) protein is Cinnamyl alcohol dehydrogenase 1 (CAD1).